An 847-amino-acid polypeptide reads, in one-letter code: Rho GTPase-activating protein 12 (847 aa).

In terms of domain architecture, SH3 spans 12–74; the sequence is PGQAYIEVEY…PAQYVKEVTR (63 aa). The segment at 110–241 is disordered; sequence LPELSSFGKP…PPNQGRPDSP (132 aa). Composition is skewed to polar residues over residues 117–174 and 191–200; these read GKPS…QNRT and TSFSQEQSCD. Residue serine 165 is modified to Phosphoserine. Serine 201, serine 213, and serine 215 each carry phosphoserine. Polar residues predominate over residues 224-234; it reads TEQIRATTPPN. Phosphothreonine occurs at positions 230 and 231. Serine 240 is modified (phosphoserine). Tyrosine 243 carries the phosphotyrosine modification. 2 WW domains span residues 265–298 and 358–391; these read IQINGEWETHKDSSGRCYYYDRGTQERTWKPPRW and DYTNEKWLKHIDDQGRQYYYSADGSRSEWELPKY. The disordered stretch occupies residues 293-317; that stretch reads WKPPRWTRDASISKGDFQSPGDQEL. Disordered stretches follow at residues 428–466 and 591–625; these read DTNDKESPTASKPCFPENESSPSSPKHQDTASSPKDQEK and PDSPGIEKHDKEKEQKDPKKLRSFKVSSIDSSEQK. Positions 445-461 are enriched in polar residues; the sequence is NESSPSSPKHQDTASSP. Residues 463–575 form the PH domain; it reads DQEKYGLLNV…WFKVLSSTIN (113 aa). Position 593 is a phosphoserine (serine 593). Residues 595–610 show a composition bias toward basic and acidic residues; sequence GIEKHDKEKEQKDPKK. The region spanning 657 to 845 is the Rho-GAP domain; it reads SNLANLCQRE…LILLELSSIF (189 aa).

Functionally, GTPase activator for the Rho-type GTPases by converting them to an inactive GDP-bound state. The polypeptide is Rho GTPase-activating protein 12 (ARHGAP12) (Macaca fascicularis (Crab-eating macaque)).